We begin with the raw amino-acid sequence, 253 residues long: Aspartate/glutamate leucyltransferase (253 aa).

Belongs to the R-transferase family. Bpt subfamily.

The protein resides in the cytoplasm. The enzyme catalyses N-terminal L-glutamyl-[protein] + L-leucyl-tRNA(Leu) = N-terminal L-leucyl-L-glutamyl-[protein] + tRNA(Leu) + H(+). It carries out the reaction N-terminal L-aspartyl-[protein] + L-leucyl-tRNA(Leu) = N-terminal L-leucyl-L-aspartyl-[protein] + tRNA(Leu) + H(+). Functions in the N-end rule pathway of protein degradation where it conjugates Leu from its aminoacyl-tRNA to the N-termini of proteins containing an N-terminal aspartate or glutamate. The protein is Aspartate/glutamate leucyltransferase of Allorhizobium ampelinum (strain ATCC BAA-846 / DSM 112012 / S4) (Agrobacterium vitis (strain S4)).